Consider the following 274-residue polypeptide: Large ribosomal subunit protein uL2 (274 aa).

The interval 224-254 (AMNPVDHPHGGGEGRTGEGQAPVSPWNTLTK) is disordered. Positions 229 to 239 (DHPHGGGEGRT) are enriched in basic and acidic residues.

It belongs to the universal ribosomal protein uL2 family. In terms of assembly, part of the 50S ribosomal subunit. Forms a bridge to the 30S subunit in the 70S ribosome.

One of the primary rRNA binding proteins. Required for association of the 30S and 50S subunits to form the 70S ribosome, for tRNA binding and peptide bond formation. It has been suggested to have peptidyltransferase activity; this is somewhat controversial. Makes several contacts with the 16S rRNA in the 70S ribosome. This is Large ribosomal subunit protein uL2 from Leptothrix cholodnii (strain ATCC 51168 / LMG 8142 / SP-6) (Leptothrix discophora (strain SP-6)).